The following is a 610-amino-acid chain: Propanediol dehydratase-reactivating factor large subunit (610 aa).

ATP is bound at residue 11–13 (NSS). 3 residues coordinate Mg(2+): threonine 105, aspartate 166, and aspartate 183. Residues 459-462 (EEIK), 557-558 (GS), and arginine 591 contribute to the ATP site.

It belongs to the DdrA/PduG family. As to quaternary structure, forms a heterotetramer PduG(2)/PduH(2). Mg(2+) serves as cofactor.

The protein localises to the bacterial microcompartment. It carries out the reaction ATP + H2O = ADP + phosphate + H(+). Its pathway is polyol metabolism; 1,2-propanediol degradation. Large subunit of the propanediol dehydratase-reactivating factor (DDR), which reactivates suicidally inhibited adenosylcobalamin-dependent propanediol dehydratase (diol dehydratase, DDH) found in the bacterial microcompartment (BMC) dedicated to 1,2-propanediol (1,2-PD) degradation. Reactivates inactivated DDH in the presence of ATP, Mg(2+) and free adenosylcobalamin (AdoCbl), by mediating the exchange of the tightly bound damaged cofactor AdoCbl for a free intact one. This subunit contains the adenosine nucleotide binding site. Functionally, expression of a cosmid containing the full 21-gene pdu operon in E.coli allows E.coli to grow on 1,2-propanediol (1,2-PD) with the appearance of bacterial microcompartments (BMC) in its cytoplasm. Its function is as follows. The 1,2-PD-specific bacterial microcompartment (BMC) concentrates low levels of 1,2-PD catabolic enzymes, concentrates volatile reaction intermediates thus enhancing pathway flux and keeps the level of toxic, mutagenic propionaldehyde low. The polypeptide is Propanediol dehydratase-reactivating factor large subunit (Citrobacter freundii).